A 140-amino-acid chain; its full sequence is 3-hydroxyacyl-[acyl-carrier-protein] dehydratase FabZ (140 aa).

Residue His46 is part of the active site.

This sequence belongs to the thioester dehydratase family. FabZ subfamily.

The protein localises to the cytoplasm. The enzyme catalyses a (3R)-hydroxyacyl-[ACP] = a (2E)-enoyl-[ACP] + H2O. Its function is as follows. Involved in unsaturated fatty acids biosynthesis. Catalyzes the dehydration of short chain beta-hydroxyacyl-ACPs and long chain saturated and unsaturated beta-hydroxyacyl-ACPs. In Pseudothermotoga lettingae (strain ATCC BAA-301 / DSM 14385 / NBRC 107922 / TMO) (Thermotoga lettingae), this protein is 3-hydroxyacyl-[acyl-carrier-protein] dehydratase FabZ.